Consider the following 251-residue polypeptide: 3-deoxy-manno-octulosonate cytidylyltransferase (251 aa).

It belongs to the KdsB family.

Its subcellular location is the cytoplasm. The catalysed reaction is 3-deoxy-alpha-D-manno-oct-2-ulosonate + CTP = CMP-3-deoxy-beta-D-manno-octulosonate + diphosphate. The protein operates within nucleotide-sugar biosynthesis; CMP-3-deoxy-D-manno-octulosonate biosynthesis; CMP-3-deoxy-D-manno-octulosonate from 3-deoxy-D-manno-octulosonate and CTP: step 1/1. It functions in the pathway bacterial outer membrane biogenesis; lipopolysaccharide biosynthesis. Functionally, activates KDO (a required 8-carbon sugar) for incorporation into bacterial lipopolysaccharide in Gram-negative bacteria. This chain is 3-deoxy-manno-octulosonate cytidylyltransferase, found in Chlorobium luteolum (strain DSM 273 / BCRC 81028 / 2530) (Pelodictyon luteolum).